The sequence spans 610 residues: uncharacterized protein (610 aa).

The span at 1–28 (MDSPSTSESPLKKNTIQDFGESNMTESP) shows a compositional bias: polar residues. The tract at residues 1-36 (MDSPSTSESPLKKNTIQDFGESNMTESPQSKEEIDE) is disordered. Residues 41-82 (CSVCKNEIIDTTSLSDCCHEFCYDCIVGWLTKGSGPFCPMCK) form an RING-type zinc finger. Disordered stretches follow at residues 390–411 (YRGQPQAPLRLGPNATNPFRPA) and 431–515 (TSSA…SADR). A compositionally biased stretch (low complexity) spans 432-447 (SSAGAGSARSRGSDSV). 2 stretches are compositionally biased toward acidic residues: residues 448–470 (VEIDDDDDNDGVDVDDDDREDSD) and 478–487 (SEEDSDEEIQ).

This is an uncharacterized protein from Caenorhabditis elegans.